A 214-amino-acid polypeptide reads, in one-letter code: Urease accessory protein UreG 2 (214 aa).

GTP is bound at residue 22–29 (GPVGSGKT).

This sequence belongs to the SIMIBI class G3E GTPase family. UreG subfamily. In terms of assembly, homodimer. UreD, UreF and UreG form a complex that acts as a GTP-hydrolysis-dependent molecular chaperone, activating the urease apoprotein by helping to assemble the nickel containing metallocenter of UreC. The UreE protein probably delivers the nickel.

The protein resides in the cytoplasm. Functionally, facilitates the functional incorporation of the urease nickel metallocenter. This process requires GTP hydrolysis, probably effectuated by UreG. This Bradyrhizobium sp. (strain BTAi1 / ATCC BAA-1182) protein is Urease accessory protein UreG 2.